The following is an 865-amino-acid chain: Taste receptor type 1 member 3 (865 aa).

Positions 1–24 are cleaved as a signal peptide; the sequence is MPGLALLGLTALLGLTALLDHGEG. Residues 25–573 are Extracellular-facing; sequence ATSCLSQQLR…FLAWGEPAVL (549 aa). N-linked (GlcNAc...) asparagine glycosylation is found at asparagine 134 and asparagine 267. Residues 574–594 form a helical membrane-spanning segment; it reads LLLALLALALGLALAALGLFL. The Cytoplasmic segment spans residues 595-606; that stretch reads WHSDSPLVQASG. Residues 607-627 traverse the membrane as a helical segment; the sequence is GPRACFGLACLGLVCLSVLLF. Residues 628–642 lie on the Extracellular side of the membrane; that stretch reads PGQPGPASCLAQQPL. Residues 643 to 663 form a helical membrane-spanning segment; the sequence is FHLPLTGCLSTFFLQAAEIFV. Over 664 to 685 the chain is Cytoplasmic; sequence GSELPPSWAEKMRGRLRGPWAW. The helical transmembrane segment at 686–706 threads the bilayer; sequence LVVLLAMLAEAALCAWYLVAF. The Extracellular portion of the chain corresponds to 707–732; the sequence is PPEVVTDWRVLPTEALVHCHVHSWIS. A helical transmembrane segment spans residues 733 to 753; it reads FGLVHATNAMLAFLCFLGTFL. Over 754 to 765 the chain is Cytoplasmic; the sequence is VQSRPGRYNGAR. The chain crosses the membrane as a helical span at residues 766-786; the sequence is GLTFAMLAYFITWISFVPLFA. Over 787-794 the chain is Extracellular; sequence NVHVAYQP. The helical transmembrane segment at 795 to 815 threads the bilayer; it reads AVQMGTILLCALGILATFHLP. Residues 816–865 lie on the Cytoplasmic side of the membrane; the sequence is KCYLLLQRPELNTPEFFLEDNARAQGSSWGQGRGESGQKQVTPDPVTSPQ. The interval 840–865 is disordered; that stretch reads QGSSWGQGRGESGQKQVTPDPVTSPQ. A compositionally biased stretch (polar residues) spans 852 to 865; the sequence is GQKQVTPDPVTSPQ.

Belongs to the G-protein coupled receptor 3 family. TAS1R subfamily. As to quaternary structure, forms homodimers or a heterodimer with TAS1R1. Expressed in taste buds.

The protein resides in the cell membrane. Its function is as follows. Putative taste receptor. TAS1R1/TAS1R3 responds to the umami taste stimulus (the taste of monosodium glutamate). The sequence is that of Taste receptor type 1 member 3 (TAS1R3) from Felis catus (Cat).